Here is a 151-residue protein sequence, read N- to C-terminus: Protein SprT-like (151 aa).

In terms of domain architecture, SprT-like spans 6 to 148; the sequence is LQALVERISL…FCRGKLKKIK (143 aa). Residue histidine 67 coordinates Zn(2+). Glutamate 68 is a catalytic residue. Histidine 71 serves as a coordination point for Zn(2+).

It belongs to the SprT family. Requires Zn(2+) as cofactor.

Its subcellular location is the cytoplasm. This is Protein SprT-like from Anoxybacillus flavithermus (strain DSM 21510 / WK1).